The chain runs to 336 residues: Biotin synthase (336 aa).

Positions 48–277 (VFGDEVEFCS…QAELRLCGGR (230 aa)) constitute a Radical SAM core domain. Cysteine 66, cysteine 70, and cysteine 73 together coordinate [4Fe-4S] cluster. Positions 110, 142, 202, and 272 each coordinate [2Fe-2S] cluster.

It belongs to the radical SAM superfamily. Biotin synthase family. In terms of assembly, homodimer. The cofactor is [4Fe-4S] cluster. [2Fe-2S] cluster is required as a cofactor.

The catalysed reaction is (4R,5S)-dethiobiotin + (sulfur carrier)-SH + 2 reduced [2Fe-2S]-[ferredoxin] + 2 S-adenosyl-L-methionine = (sulfur carrier)-H + biotin + 2 5'-deoxyadenosine + 2 L-methionine + 2 oxidized [2Fe-2S]-[ferredoxin]. The protein operates within cofactor biosynthesis; biotin biosynthesis; biotin from 7,8-diaminononanoate: step 2/2. Functionally, catalyzes the conversion of dethiobiotin (DTB) to biotin by the insertion of a sulfur atom into dethiobiotin via a radical-based mechanism. This is Biotin synthase from Persephonella marina (strain DSM 14350 / EX-H1).